A 966-amino-acid chain; its full sequence is Glycine dehydrogenase (decarboxylating) (966 aa).

The residue at position 713 (lysine 713) is an N6-(pyridoxal phosphate)lysine.

Belongs to the GcvP family. In terms of assembly, the glycine cleavage system is composed of four proteins: P, T, L and H. Requires pyridoxal 5'-phosphate as cofactor.

The catalysed reaction is N(6)-[(R)-lipoyl]-L-lysyl-[glycine-cleavage complex H protein] + glycine + H(+) = N(6)-[(R)-S(8)-aminomethyldihydrolipoyl]-L-lysyl-[glycine-cleavage complex H protein] + CO2. The glycine cleavage system catalyzes the degradation of glycine. The P protein binds the alpha-amino group of glycine through its pyridoxal phosphate cofactor; CO(2) is released and the remaining methylamine moiety is then transferred to the lipoamide cofactor of the H protein. The protein is Glycine dehydrogenase (decarboxylating) of Shewanella halifaxensis (strain HAW-EB4).